The chain runs to 433 residues: Serine hydroxymethyltransferase (433 aa).

Residues L127 and 131-133 (GHL) contribute to the (6S)-5,6,7,8-tetrahydrofolate site. At K236 the chain carries N6-(pyridoxal phosphate)lysine.

Belongs to the SHMT family. Homodimer. Pyridoxal 5'-phosphate is required as a cofactor.

It localises to the cytoplasm. It carries out the reaction (6R)-5,10-methylene-5,6,7,8-tetrahydrofolate + glycine + H2O = (6S)-5,6,7,8-tetrahydrofolate + L-serine. Its pathway is one-carbon metabolism; tetrahydrofolate interconversion. The protein operates within amino-acid biosynthesis; glycine biosynthesis; glycine from L-serine: step 1/1. In terms of biological role, catalyzes the reversible interconversion of serine and glycine with tetrahydrofolate (THF) serving as the one-carbon carrier. This reaction serves as the major source of one-carbon groups required for the biosynthesis of purines, thymidylate, methionine, and other important biomolecules. Also exhibits THF-independent aldolase activity toward beta-hydroxyamino acids, producing glycine and aldehydes, via a retro-aldol mechanism. The sequence is that of Serine hydroxymethyltransferase from Corynebacterium urealyticum (strain ATCC 43042 / DSM 7109).